Here is a 352-residue protein sequence, read N- to C-terminus: Gap junction alpha-4 protein (352 aa).

Residues 2–23 lie on the Cytoplasmic side of the membrane; that stretch reads GDWEFLEKLLDQVQEHSTSIGK. The helical transmembrane segment at 24 to 46 threads the bilayer; it reads IWLMVLFIFRILILGLAGESVWG. At 47-76 the chain is on the extracellular side; the sequence is DEQSDFICNTEQPGCTNVCYDKAFPISHVR. A helical transmembrane segment spans residues 77–99; that stretch reads YWVLQFLFVSTPTLFYLGHVIYL. Topologically, residues 100–153 are cytoplasmic; it reads SRREEKLKQKESELRALDDKEQVEQAIAIIEKKKMKLYIQEDGTVKIKGALMCT. Residues 154–176 form a helical membrane-spanning segment; it reads YLTSVIFKSLFEAGFLLGQWYLY. The Extracellular portion of the chain corresponds to 177–208; the sequence is GFVMTPIYVCERVPCPHKVDCFVSRPMEKTIF. Residues 209–231 traverse the membrane as a helical segment; it reads IVFMLVVSLISLFLNVLELIHLV. At 232–352 the chain is on the cytoplasmic side; the sequence is CKSMIDTLKK…SSSASKKQYV (121 aa). Residues 330 to 352 form a disordered region; that stretch reads KTHSTMEKPSTRASSSASKKQYV. Over residues 340–352 the composition is skewed to polar residues; it reads TRASSSASKKQYV.

The protein belongs to the connexin family. Alpha-type (group II) subfamily. A connexon is composed of a hexamer of connexins.

It is found in the cell membrane. Its subcellular location is the cell junction. It localises to the gap junction. Its function is as follows. One gap junction consists of a cluster of closely packed pairs of transmembrane channels, the connexons, through which materials of low MW diffuse from one cell to a neighboring cell. This is Gap junction alpha-4 protein (gja4) from Xenopus tropicalis (Western clawed frog).